The chain runs to 195 residues: RFKKIRRLGALPGLTSKRPRSGSDLKNQLRSGKRSQYRIRLEEKQKLRFHYGLTERQLLKYVHIAGKAKGSTGQILLQLLEMRLDNILFRLGMASTIPGARQLVNHRHILVNGRIVDIPSYRCKPRDIITTKNKQRSKALIQNFIASSPHQEELPNHLTIDPFQYKGLVNQIIDSKWIGLKINELLVVEYYSRQT.

In terms of domain architecture, S4 RNA-binding spans 82–143 (MRLDNILFRL…KQRSKALIQN (62 aa)).

This sequence belongs to the universal ribosomal protein uS4 family. In terms of assembly, part of the 30S ribosomal subunit. Contacts protein S5. The interaction surface between S4 and S5 is involved in control of translational fidelity.

The protein resides in the plastid. Its subcellular location is the chloroplast. One of the primary rRNA binding proteins, it binds directly to 16S rRNA where it nucleates assembly of the body of the 30S subunit. In terms of biological role, with S5 and S12 plays an important role in translational accuracy. The polypeptide is Small ribosomal subunit protein uS4c (rps4) (Gladiolus murielae (Abyssinian gladiolus)).